Consider the following 233-residue polypeptide: 2,3,4,5-tetrahydropyridine-2,6-dicarboxylate N-acetyltransferase (233 aa).

Belongs to the transferase hexapeptide repeat family. DapH subfamily.

The enzyme catalyses (S)-2,3,4,5-tetrahydrodipicolinate + acetyl-CoA + H2O = L-2-acetamido-6-oxoheptanedioate + CoA. The protein operates within amino-acid biosynthesis; L-lysine biosynthesis via DAP pathway; LL-2,6-diaminopimelate from (S)-tetrahydrodipicolinate (acetylase route): step 1/3. Catalyzes the transfer of an acetyl group from acetyl-CoA to tetrahydrodipicolinate. In Thermotoga petrophila (strain ATCC BAA-488 / DSM 13995 / JCM 10881 / RKU-1), this protein is 2,3,4,5-tetrahydropyridine-2,6-dicarboxylate N-acetyltransferase.